Here is a 1462-residue protein sequence, read N- to C-terminus: Iron-sulfur cluster assembly protein SufD (1462 aa).

Disordered stretches follow at residues 500–525 (IDNN…DNPY), 938–970 (NQNK…GTEQ), and 1111–1153 (NIPS…EKEE). Residues 510-523 (NNNNNNNNNNNCDN) show a composition bias toward low complexity. The span at 961–970 (HIQDEQGTEQ) shows a compositional bias: basic and acidic residues. Over residues 1111–1136 (NIPSNNKQTNSNNNSEYNNEQNNCSN) the composition is skewed to low complexity.

It belongs to the iron-sulfur cluster assembly SufBD family. In terms of assembly, component of a complex composed of SufB, SufC and SufD in a stoichiometric ratio of 1:2:1. Interacts with SufB. Interacts with SufC; the interaction enhances the ATPase activity of SufC. Post-translationally, proteolytically cleaved.

It is found in the plastid. The protein localises to the apicoplast. It functions in the pathway cofactor biosynthesis; iron-sulfur cluster biosynthesis. Participates in the sulfur mobilization (SUF) pathway for iron-sulfur (Fe-S) cluster biogenesis. As part of a complex consisting of SufB-SufC(2)-SufD, involved in assembly of [4Fe-4S] clusters. Enhances the ATPase activity of SufC. The protein is Iron-sulfur cluster assembly protein SufD of Plasmodium falciparum (isolate 3D7).